The primary structure comprises 291 residues: Regulator of rDNA transcription protein 5 (291 aa).

Residues 21 to 104 (KRIYISNLDF…RTLKIKMYVP (84 aa)) form the RRM 1 domain. The tract at residues 109-151 (ARAERRKEKRKVPAPQAEENPDAAPQDAQQPQPPAPAEEPTSK) is disordered. The RRM 2 domain occupies 152 to 235 (DTVYCAYLPS…KKITLRPARL (84 aa)). The interval 271–291 (HRQQEAEIPAAETPDDVAATA) is disordered.

Belongs to the RRT5 family.

Functionally, may be involved in the modulation of rDNA transcription. This chain is Regulator of rDNA transcription protein 5 (RRT5), found in Lachancea thermotolerans (strain ATCC 56472 / CBS 6340 / NRRL Y-8284) (Yeast).